An 81-amino-acid chain; its full sequence is Acyl carrier protein (81 aa).

The 76-residue stretch at 4–79 folds into the Carrier domain; that stretch reads SEIFGKVKDI…AAVDFIAGKV (76 aa). O-(pantetheine 4'-phosphoryl)serine is present on Ser39.

The protein belongs to the acyl carrier protein (ACP) family. In terms of processing, 4'-phosphopantetheine is transferred from CoA to a specific serine of apo-ACP by AcpS. This modification is essential for activity because fatty acids are bound in thioester linkage to the sulfhydryl of the prosthetic group.

Its subcellular location is the cytoplasm. Its pathway is lipid metabolism; fatty acid biosynthesis. Functionally, carrier of the growing fatty acid chain in fatty acid biosynthesis. This Acaryochloris marina (strain MBIC 11017) protein is Acyl carrier protein.